The chain runs to 277 residues: Shikimate dehydrogenase (NADP(+)) (277 aa).

Shikimate contacts are provided by residues 15-17 and T62; that span reads SLS. Residue K66 is the Proton acceptor of the active site. The shikimate site is built by N87 and D102. Residues 127–131, 151–156, and I219 each bind NADP(+); these read GAGGA and NRTVDK. A shikimate-binding site is contributed by Y221. G242 is a binding site for NADP(+).

This sequence belongs to the shikimate dehydrogenase family. In terms of assembly, homodimer.

The catalysed reaction is shikimate + NADP(+) = 3-dehydroshikimate + NADPH + H(+). It functions in the pathway metabolic intermediate biosynthesis; chorismate biosynthesis; chorismate from D-erythrose 4-phosphate and phosphoenolpyruvate: step 4/7. In terms of biological role, involved in the biosynthesis of the chorismate, which leads to the biosynthesis of aromatic amino acids. Catalyzes the reversible NADPH linked reduction of 3-dehydroshikimate (DHSA) to yield shikimate (SA). In Bacillus cereus (strain AH820), this protein is Shikimate dehydrogenase (NADP(+)).